The chain runs to 551 residues: Protein GPR107 (551 aa).

Residues 1-33 (MAVRVPLGCTGSFCPRLLPLLALLELLVDPSLG) form the signal peptide. The Extracellular segment spans residues 34 to 262 (RVHHLALKDD…YLSAGEIPLP (229 aa)). N-linked (GlcNAc...) asparagine glycosylation is present at Asn-64. A disordered region spans residues 127–183 (GVKVRSPPEAGKQLPEIVFSKDEKVPSRSQEPAVSSNPKDSKVQRTPDGSKAQRSTV). Positions 153–164 (SRSQEPAVSSNP) are enriched in polar residues. Asn-209 is a glycosylation site (N-linked (GlcNAc...) asparagine). The helical transmembrane segment at 263-283 (KLYVSMALLFFLSGTVWIHIL) threads the bilayer. At 284 to 292 (RKRRNDVFK) the chain is on the cytoplasmic side. Residues 293–313 (IHWLMAALPFTKSLSLVFHAI) form a helical membrane-spanning segment. At 314–336 (DYHYISSQGFPIEGWAVVYYITH) the chain is on the extracellular side. Residues 337–357 (LLKGALLFITIALIGTGWAFI) form a helical membrane-spanning segment. Residues 358-367 (KHILSDKDKK) are Cytoplasmic-facing. Residues 368 to 388 (IFMIVIPLQVLANVAYIIIES) form a helical membrane-spanning segment. The Extracellular segment spans residues 389-401 (TEEGTTEYGLWKD). A helical transmembrane segment spans residues 402–422 (SLFLVDLLCCGAILFPVVWSI). Over 423–443 (RHLQEASATDGKAAINLAKLK) the chain is Cytoplasmic. Residues 444–466 (LFRHYYVLIVCYIYFTRIIAFLL) traverse the membrane as a helical segment. The Extracellular portion of the chain corresponds to 467–475 (KFAVPFQWK). The chain crosses the membrane as a helical span at residues 476 to 495 (WLYQLLDETATLVFFVLTGY). At 496-551 (KFRPASDNPYLQLSQEEDDLEMESVVTTSGVMENMKKVKKVSNGAVEPQGSWEGTA) the chain is on the cytoplasmic side.

Belongs to the LU7TM family. In terms of processing, cleaved by FURIN to yield two fragments that remain associated via a disulfide bond. In terms of tissue distribution, widely expressed. Not detected in the duodenum, nor in the exocrine pancreas.

The protein localises to the cell membrane. Its subcellular location is the golgi apparatus. The protein resides in the trans-Golgi network membrane. In terms of biological role, has been proposed to act as a receptor for neuronostatin, a peptide derived from the somatostatin/SST precursor. Involved in blood sugar regulation through the induction of glucagon in response to low glucose. This Rattus norvegicus (Rat) protein is Protein GPR107 (Gpr107).